Reading from the N-terminus, the 194-residue chain is Adenylate kinase (194 aa).

10-15 (GAGKGT) is a binding site for ATP. Positions 30-59 (STGDMLRAAVAQQSEIGKRAKAVMDAGQLV) are NMP. Residues Thr-31, Arg-36, 57-59 (QLV), 85-88 (GYPR), and Gln-92 each bind AMP. Residues 126 to 142 (SRVAETIAKGAQVRSDD) are LID. Arg-127 serves as a coordination point for ATP. AMP-binding residues include Arg-139 and Arg-150. Ala-178 contacts ATP.

The protein belongs to the adenylate kinase family. As to quaternary structure, monomer.

The protein localises to the cytoplasm. The catalysed reaction is AMP + ATP = 2 ADP. It functions in the pathway purine metabolism; AMP biosynthesis via salvage pathway; AMP from ADP: step 1/1. Catalyzes the reversible transfer of the terminal phosphate group between ATP and AMP. Plays an important role in cellular energy homeostasis and in adenine nucleotide metabolism. In Brucella melitensis biotype 1 (strain ATCC 23456 / CCUG 17765 / NCTC 10094 / 16M), this protein is Adenylate kinase.